The primary structure comprises 246 residues: Mast cell protease-like protein (246 aa).

The first 18 residues, 1-18, serve as a signal peptide directing secretion; it reads MQALLFLMALLLPSGAGA. Residues 19–20 constitute a propeptide, activation peptide; sequence EE. The region spanning 21–244 is the Peptidase S1 domain; sequence IIGGVESEPH…HVPWINRVIK (224 aa). Cys50 and Cys66 form a disulfide bridge. Active-site charge relay system residues include His65 and Asp109. 2 disulfide bridges follow: Cys143-Cys208 and Cys174-Cys187. Ser202 functions as the Charge relay system in the catalytic mechanism.

This sequence belongs to the peptidase S1 family. Granzyme subfamily.

This is Mast cell protease-like protein (Mcptl) from Mus musculus (Mouse).